We begin with the raw amino-acid sequence, 619 residues long: Enolase 4 (619 aa).

The segment covering 173–184 (DKERKELEKSQE) has biased composition (basic and acidic residues). Positions 173-236 (DKERKELEKS…PPEPPEPVLH (64 aa)) are disordered. Residues 188 to 206 (PAPPPVTLPPPPPPPPPPP) show a composition bias toward pro residues. Glutamate 302 lines the substrate pocket. Residues 333–354 (TLPPPKQETKKGHNGSKRAQPP) are disordered. Lysine 497 serves as the catalytic Proton acceptor. A substrate-binding site is contributed by lysine 548.

This sequence belongs to the enolase family. Interacts with ENO1. Isoform 1 and isoform 4 interact with AKAP4. Post-translationally, synthesized as an approximately 70-kDa precursor, which then undergoes proteolytic cleavage to an approximately 60-kDa enzyme; HOATZ associates directly or indirectly with ENO4 to mediate this process before its transport to mature flagella. Testis-specific. Expressed in spermatids and ependyma (at protein level). As to expression, expressed at higher levels in late spermatids than in pachytene spermatocytes. In terms of tissue distribution, expressed at higher levels in pachytene spermatocytes than in late spermatids.

The catalysed reaction is (2R)-2-phosphoglycerate = phosphoenolpyruvate + H2O. It functions in the pathway carbohydrate degradation; glycolysis; pyruvate from D-glyceraldehyde 3-phosphate: step 4/5. Required for sperm motility, function and male fertility. May be involved in the normal assembly of the sperm fibrous sheath and provides most of the enolase activity in sperm. This chain is Enolase 4 (Eno4), found in Mus musculus (Mouse).